Consider the following 60-residue polypeptide: Large ribosomal subunit protein bL32 (60 aa).

Positions 1-60 (MAVQQNKKSRSARDMRRSHDALESNALSVEKSTGEVHLRHHVSPDGFYRGRKVVDKGSDE) are disordered. Residues 11–22 (SARDMRRSHDAL) are compositionally biased toward basic and acidic residues.

The protein belongs to the bacterial ribosomal protein bL32 family.

This is Large ribosomal subunit protein bL32 from Pseudomonas aeruginosa (strain LESB58).